Here is a 120-residue protein sequence, read N- to C-terminus: PYEKIGAELVKEVAKKTDDVAGDGTTTATVLAQALVKEGLRNVAAGANPLGLKRGIEKAVEKVTQTLLSSAKDVETKEQIAATAGISAGDQSIGDLIAEAMDKVGNEGVITVEESNTFGL.

23–27 (DGTTT) is an ATP binding site.

It belongs to the chaperonin (HSP60) family. As to quaternary structure, forms a cylinder of 14 subunits composed of two heptameric rings stacked back-to-back. Interacts with the co-chaperonin GroES.

The protein resides in the cytoplasm. It catalyses the reaction ATP + H2O + a folded polypeptide = ADP + phosphate + an unfolded polypeptide.. Its function is as follows. Together with its co-chaperonin GroES, plays an essential role in assisting protein folding. The GroEL-GroES system forms a nano-cage that allows encapsulation of the non-native substrate proteins and provides a physical environment optimized to promote and accelerate protein folding. The polypeptide is Chaperonin GroEL (Mycobacterium asiaticum).